The following is a 364-amino-acid chain: tRNA/tmRNA (uracil-C(5))-methyltransferase (364 aa).

Residues Q188, Y216, N221, E237, and D297 each contribute to the S-adenosyl-L-methionine site. The active-site Nucleophile is the C322. The active-site Proton acceptor is E356.

It belongs to the class I-like SAM-binding methyltransferase superfamily. RNA M5U methyltransferase family. TrmA subfamily.

The catalysed reaction is uridine(54) in tRNA + S-adenosyl-L-methionine = 5-methyluridine(54) in tRNA + S-adenosyl-L-homocysteine + H(+). The enzyme catalyses uridine(341) in tmRNA + S-adenosyl-L-methionine = 5-methyluridine(341) in tmRNA + S-adenosyl-L-homocysteine + H(+). Functionally, dual-specificity methyltransferase that catalyzes the formation of 5-methyluridine at position 54 (m5U54) in all tRNAs, and that of position 341 (m5U341) in tmRNA (transfer-mRNA). This chain is tRNA/tmRNA (uracil-C(5))-methyltransferase, found in Colwellia psychrerythraea (strain 34H / ATCC BAA-681) (Vibrio psychroerythus).